The sequence spans 584 residues: ATP-dependent lipid A-core flippase (584 aa).

5 helical membrane-spanning segments follow: residues 15–35, 63–83, 153–173, 251–271, and 277–297; these read LLGY…SMAV, IMWV…AGFI, LGML…CLVV, TGVT…FAGL, and GLTA…FAPV. The region spanning 27-309 is the ABC transmembrane type-1 domain; sequence LLSMLSMAVA…ISSVSQAMQR (283 aa). An ABC transporter domain is found at 341-576; the sequence is LSFDAVSFAY…GGLYARLHSL (236 aa). 375 to 382 is a binding site for ATP; it reads GSSGSGKT.

The protein belongs to the ABC transporter superfamily. Lipid exporter (TC 3.A.1.106) family. As to quaternary structure, homodimer.

The protein resides in the cell inner membrane. It carries out the reaction ATP + H2O + lipid A-core oligosaccharideSide 1 = ADP + phosphate + lipid A-core oligosaccharideSide 2.. Its function is as follows. Involved in lipopolysaccharide (LPS) biosynthesis. Translocates lipid A-core from the inner to the outer leaflet of the inner membrane. Transmembrane domains (TMD) form a pore in the inner membrane and the ATP-binding domain (NBD) is responsible for energy generation. This chain is ATP-dependent lipid A-core flippase, found in Chromobacterium violaceum (strain ATCC 12472 / DSM 30191 / JCM 1249 / CCUG 213 / NBRC 12614 / NCIMB 9131 / NCTC 9757 / MK).